The chain runs to 515 residues: Fatty acyl-CoA reductase 1 (515 aa).

The Cytoplasmic portion of the chain corresponds to 1–465 (MVSIPEYYEG…ARKHLNKLRN (465 aa)). Residues 451–507 (SGLPAARKHLNKLRNIRYGFNTILVILIWRIFIARSQMARNIWYFVVSLCYKFLSYF) form a necessary and sufficient for PEX19-mediated localization into peroxisome membrane region. The chain crosses the membrane as a helical span at residues 466 to 483 (IRYGFNTILVILIWRIFI). At 484 to 515 (ARSQMARNIWYFVVSLCYKFLSYFRASSTMRY) the chain is on the peroxisomal side.

It belongs to the fatty acyl-CoA reductase family. As to quaternary structure, interacts with PEX19; PEX19 mediates the targeting of FAR1 to peroxisomes.

The protein localises to the peroxisome membrane. The enzyme catalyses a long-chain fatty acyl-CoA + 2 NADPH + 2 H(+) = a long-chain primary fatty alcohol + 2 NADP(+) + CoA. It carries out the reaction hexadecanoyl-CoA + 2 NADPH + 2 H(+) = hexadecan-1-ol + 2 NADP(+) + CoA. It catalyses the reaction octadecanoyl-CoA + 2 NADPH + 2 H(+) = octadecan-1-ol + 2 NADP(+) + CoA. The catalysed reaction is (9Z)-octadecenoyl-CoA + 2 NADPH + 2 H(+) = (9Z)-octadecen-1-ol + 2 NADP(+) + CoA. The enzyme catalyses (9Z,12Z)-octadecadienoyl-CoA + 2 NADPH + 2 H(+) = (9Z,12Z)-octadecadien-1-ol + 2 NADP(+) + CoA. It carries out the reaction eicosanoyl-CoA + 2 NADPH + 2 H(+) = eicosan-1-ol + 2 NADP(+) + CoA. It catalyses the reaction 16-methylheptadecanoyl-CoA + 2 NADPH + 2 H(+) = 16-methylheptadecan-1-ol + 2 NADP(+) + CoA. The catalysed reaction is 18-methylnonadecanoyl-CoA + 2 NADPH + 2 H(+) = 18-methylnonadecan-1-ol + 2 NADP(+) + CoA. Functionally, catalyzes the reduction of saturated and unsaturated C16 or C18 fatty acyl-CoA to fatty alcohols. It plays an essential role in the production of ether lipids/plasmalogens which synthesis requires fatty alcohols. In parallel, it is also required for wax monoesters production since fatty alcohols also constitute a substrate for their synthesis. The protein is Fatty acyl-CoA reductase 1 of Pongo abelii (Sumatran orangutan).